The following is a 215-amino-acid chain: uncharacterized protein (215 aa).

Catalysis depends on charge relay system residues Ser114, Asp162, and His194.

Belongs to the AB hydrolase superfamily. AB hydrolase 2 family.

This is an uncharacterized protein from Rickettsia typhi (strain ATCC VR-144 / Wilmington).